A 269-amino-acid polypeptide reads, in one-letter code: 3-methyl-2-oxobutanoate hydroxymethyltransferase (269 aa).

2 residues coordinate Mg(2+): aspartate 46 and aspartate 85. 3-methyl-2-oxobutanoate-binding positions include aspartate 46 to serine 47, aspartate 85, and lysine 114. Position 116 (glutamate 116) interacts with Mg(2+). Residue glutamate 183 is the Proton acceptor of the active site.

Belongs to the PanB family. Homodecamer; pentamer of dimers. It depends on Mg(2+) as a cofactor.

The protein resides in the cytoplasm. It carries out the reaction 3-methyl-2-oxobutanoate + (6R)-5,10-methylene-5,6,7,8-tetrahydrofolate + H2O = 2-dehydropantoate + (6S)-5,6,7,8-tetrahydrofolate. Its pathway is cofactor biosynthesis; (R)-pantothenate biosynthesis; (R)-pantoate from 3-methyl-2-oxobutanoate: step 1/2. Its function is as follows. Catalyzes the reversible reaction in which hydroxymethyl group from 5,10-methylenetetrahydrofolate is transferred onto alpha-ketoisovalerate to form ketopantoate. The chain is 3-methyl-2-oxobutanoate hydroxymethyltransferase from Methylococcus capsulatus (strain ATCC 33009 / NCIMB 11132 / Bath).